The sequence spans 393 residues: NAD(P)H-quinone oxidoreductase subunit H, chloroplastic (393 aa).

The protein belongs to the complex I 49 kDa subunit family. In terms of assembly, NDH is composed of at least 16 different subunits, 5 of which are encoded in the nucleus.

It is found in the plastid. It localises to the chloroplast thylakoid membrane. It carries out the reaction a plastoquinone + NADH + (n+1) H(+)(in) = a plastoquinol + NAD(+) + n H(+)(out). It catalyses the reaction a plastoquinone + NADPH + (n+1) H(+)(in) = a plastoquinol + NADP(+) + n H(+)(out). Functionally, NDH shuttles electrons from NAD(P)H:plastoquinone, via FMN and iron-sulfur (Fe-S) centers, to quinones in the photosynthetic chain and possibly in a chloroplast respiratory chain. The immediate electron acceptor for the enzyme in this species is believed to be plastoquinone. Couples the redox reaction to proton translocation, and thus conserves the redox energy in a proton gradient. In Solanum bulbocastanum (Wild potato), this protein is NAD(P)H-quinone oxidoreductase subunit H, chloroplastic.